A 667-amino-acid polypeptide reads, in one-letter code: Chaperone protein DnaK (667 aa).

T196 carries the post-translational modification Phosphothreonine; by autocatalysis. Disordered stretches follow at residues 495–525 and 595–667; these read EANS…RKER and AGEE…GDDE. Residues 506–525 are compositionally biased toward basic and acidic residues; sequence EKMKEEAEQHAEEDERRKER. The segment covering 595-612 has biased composition (low complexity); the sequence is AGEEIREAQQQQAQQGAA. Residues 630–641 are compositionally biased toward gly residues; that stretch reads GPAGGPTGGPAS. Residues 647–667 are compositionally biased toward acidic residues; the sequence is DSDEEDVQDADYEVVDEGDDE.

The protein belongs to the heat shock protein 70 family.

Acts as a chaperone. In Salinibacter ruber (strain DSM 13855 / M31), this protein is Chaperone protein DnaK.